We begin with the raw amino-acid sequence, 831 residues long: Prolactin receptor (831 aa).

The first 23 residues, methionine 1 to threonine 23, serve as a signal peptide directing secretion. The Extracellular portion of the chain corresponds to serine 24 to aspartate 438. Fibronectin type-III domains lie at lysine 30–glycine 128, serine 129–glutamate 232, lysine 233–aspartate 331, and proline 332–aspartate 433. A disulfide bridge connects residues cysteine 36 and cysteine 46. A glycan (N-linked (GlcNAc...) asparagine) is linked at asparagine 59. Residues cysteine 75 and cysteine 86 are joined by a disulfide bond. 8 N-linked (GlcNAc...) asparagine glycosylation sites follow: asparagine 91, asparagine 100, asparagine 112, asparagine 132, asparagine 262, asparagine 303, asparagine 315, and asparagine 335. The Zn(2+) site is built by aspartate 414 and histidine 416. A WSXWS motif motif is present at residues tryptophan 419 to serine 423. The chain crosses the membrane as a helical span at residues methionine 439–threonine 459. Topologically, residues methionine 460–lysine 831 are cytoplasmic. The Box 1 motif motif lies at isoleucine 471–lysine 479. Disordered stretches follow at residues histidine 527–leucine 563 and histidine 776–lysine 831. Positions threonine 545–glycine 554 are enriched in basic and acidic residues. Over residues threonine 777–tyrosine 803 the composition is skewed to polar residues.

The protein belongs to the type I cytokine receptor family. Type 1 subfamily.

The protein localises to the membrane. This is a receptor for the anterior pituitary hormone prolactin. The polypeptide is Prolactin receptor (PRLR) (Meleagris gallopavo (Wild turkey)).